A 130-amino-acid polypeptide reads, in one-letter code: Small ribosomal subunit protein uS11 (130 aa).

It belongs to the universal ribosomal protein uS11 family. Part of the 30S ribosomal subunit. Interacts with proteins S7 and S18. Binds to IF-3.

Functionally, located on the platform of the 30S subunit, it bridges several disparate RNA helices of the 16S rRNA. Forms part of the Shine-Dalgarno cleft in the 70S ribosome. The sequence is that of Small ribosomal subunit protein uS11 from Shewanella halifaxensis (strain HAW-EB4).